The chain runs to 359 residues: UDP-3-O-acylglucosamine N-acyltransferase (359 aa).

The active-site Proton acceptor is His248.

This sequence belongs to the transferase hexapeptide repeat family. LpxD subfamily. As to quaternary structure, homotrimer.

It catalyses the reaction a UDP-3-O-[(3R)-3-hydroxyacyl]-alpha-D-glucosamine + a (3R)-hydroxyacyl-[ACP] = a UDP-2-N,3-O-bis[(3R)-3-hydroxyacyl]-alpha-D-glucosamine + holo-[ACP] + H(+). It functions in the pathway bacterial outer membrane biogenesis; LPS lipid A biosynthesis. Catalyzes the N-acylation of UDP-3-O-acylglucosamine using 3-hydroxyacyl-ACP as the acyl donor. Is involved in the biosynthesis of lipid A, a phosphorylated glycolipid that anchors the lipopolysaccharide to the outer membrane of the cell. The protein is UDP-3-O-acylglucosamine N-acyltransferase of Chlamydia abortus (strain DSM 27085 / S26/3) (Chlamydophila abortus).